The sequence spans 107 residues: Nucleoid-associated protein XF_1808 (107 aa).

It belongs to the YbaB/EbfC family. As to quaternary structure, homodimer.

It localises to the cytoplasm. It is found in the nucleoid. Binds to DNA and alters its conformation. May be involved in regulation of gene expression, nucleoid organization and DNA protection. This chain is Nucleoid-associated protein XF_1808, found in Xylella fastidiosa (strain 9a5c).